Here is a 440-residue protein sequence, read N- to C-terminus: Probable D-serine dehydratase (440 aa).

An N6-(pyridoxal phosphate)lysine modification is found at K120.

The protein belongs to the serine/threonine dehydratase family. DsdA subfamily. Pyridoxal 5'-phosphate is required as a cofactor.

The enzyme catalyses D-serine = pyruvate + NH4(+). This is Probable D-serine dehydratase from Shouchella clausii (strain KSM-K16) (Alkalihalobacillus clausii).